The primary structure comprises 163 residues: Meiotically up-regulated gene 109 protein (163 aa).

4 helical membrane passes run 61 to 78 (YRFY…FFIW), 82 to 104 (ALLA…SLTI), 114 to 134 (YSIP…APVG), and 136 to 156 (LFWS…LTTY).

The protein resides in the membrane. Has a role in meiosis. The protein is Meiotically up-regulated gene 109 protein (mug109) of Schizosaccharomyces pombe (strain 972 / ATCC 24843) (Fission yeast).